The primary structure comprises 448 residues: MLQQPAGGYTTLEQFTFTIRNDGTNATPTQFLQLLSYEATENELVKKAIPTPETHLPSARNVPGNVYIEDAITQALFGISAQNVNAHGYFSRLSALALPNTSARLGLDGVIYNNETVGIPFYDPVAVAKFATTYAKLGNASTPRYRADMIDIYAHVGLELAGTDAERAAGVMPVKRAKFDSWEGSLISLSRDVVYWKNLAFLIDLCSLEGDALNTFKTRNRDAFRMMLFIMSTAVAANVVNRKVTKRVDRVIEYIGSNSMRTAGRTATITYDLSRHEFAAKFLQLTFTKWNATQATTRSMPDMRTPRTSVTSAGESALVRHNRYMTESFKGLSPIALAQKKHEMMLHTHEIHSMDIDGSIKNMVERETVNKMNEIDAMNTMSWKEEIHAVEQTTVHGTHQMSADPEQTQLISQETAVITHRASSDADENEYGNSVSEMTIGTHSDDIL.

Positions isoleucine 418–leucine 448 are disordered. The segment covering tyrosine 431–threonine 442 has biased composition (polar residues).

It localises to the virion. The polypeptide is Putative structural protein VP5 (S8) (Lymantria dispar cypovirus 1 (isolate Rao) (LdCPV-1)).